Reading from the N-terminus, the 409-residue chain is NADH-quinone oxidoreductase subunit D (409 aa).

It belongs to the complex I 49 kDa subunit family. As to quaternary structure, NDH-1 is composed of 14 different subunits. Subunits NuoB, C, D, E, F, and G constitute the peripheral sector of the complex.

It localises to the cell inner membrane. It carries out the reaction a quinone + NADH + 5 H(+)(in) = a quinol + NAD(+) + 4 H(+)(out). Its function is as follows. NDH-1 shuttles electrons from NADH, via FMN and iron-sulfur (Fe-S) centers, to quinones in the respiratory chain. The immediate electron acceptor for the enzyme in this species is believed to be ubiquinone. Couples the redox reaction to proton translocation (for every two electrons transferred, four hydrogen ions are translocated across the cytoplasmic membrane), and thus conserves the redox energy in a proton gradient. The polypeptide is NADH-quinone oxidoreductase subunit D (Campylobacter concisus (strain 13826)).